Here is a 572-residue protein sequence, read N- to C-terminus: Putative lysozyme-like protein (572 aa).

The signal sequence occupies residues 1–17 (MRLLLVLLALIFSVVSA). Positions 145–165 (MSSSGSSSSSGSSGSSSSSSG) are enriched in low complexity. Disordered regions lie at residues 145-199 (MSSS…HGGG), 231-297 (SSSS…GGGV), 326-388 (ANSV…GERK), and 433-469 (AGSS…GGSG). A compositionally biased stretch (gly residues) spans 166–185 (SSGGGSSGGGSGGGGGGSGL). Over residues 231–240 (SSSSADAGSS) the composition is skewed to low complexity. Over residues 258-282 (STGGTGGSSGSSGGGSGGGGGGSGL) the composition is skewed to gly residues. Over residues 326–358 (ANSVSSLAGSMSSSGSSSSSGSSGSSSSSSSSG) the composition is skewed to low complexity. Residues 359–382 (SSGGSSGGGSSGGGSGGGGGGSGL) are compositionally biased toward gly residues. Over residues 433–452 (AGSSSSSGSSGSSSSSSSSG) the composition is skewed to low complexity. Positions 453-469 (SSGGSSGGSSGGGGGSG) are enriched in gly residues.

This sequence belongs to the dictyostelium lysozyme family.

This Dictyostelium discoideum (Social amoeba) protein is Putative lysozyme-like protein (alyL).